The chain runs to 518 residues: Zinc finger protein 449 (518 aa).

The SCAN box domain occupies arginine 30–leucine 112. The span at asparagine 292–leucine 304 shows a compositional bias: polar residues. A disordered region spans residues asparagine 292 to cysteine 325. 7 consecutive C2H2-type zinc fingers follow at residues histidine 323 to histidine 345, histidine 351 to histidine 373, tyrosine 379 to histidine 401, tyrosine 407 to histidine 429, histidine 435 to histidine 457, phenylalanine 463 to histidine 485, and tyrosine 491 to histidine 513.

It belongs to the krueppel C2H2-type zinc-finger protein family.

Its subcellular location is the nucleus. In terms of biological role, may be involved in transcriptional regulation. The polypeptide is Zinc finger protein 449 (ZNF449) (Homo sapiens (Human)).